The sequence spans 154 residues: Large ribosomal subunit protein uL13 (154 aa).

It belongs to the universal ribosomal protein uL13 family. As to quaternary structure, part of the 50S ribosomal subunit.

This protein is one of the early assembly proteins of the 50S ribosomal subunit, although it is not seen to bind rRNA by itself. It is important during the early stages of 50S assembly. In Bartonella quintana (strain Toulouse) (Rochalimaea quintana), this protein is Large ribosomal subunit protein uL13.